The chain runs to 99 residues: Small ribosomal subunit protein bS16 (99 aa).

Residues 80–99 are disordered; that stretch reads PPRQQNEAKRETAETAQPEA.

The protein belongs to the bacterial ribosomal protein bS16 family.

This Thermomicrobium roseum (strain ATCC 27502 / DSM 5159 / P-2) protein is Small ribosomal subunit protein bS16.